Here is a 200-residue protein sequence, read N- to C-terminus: 3-isopropylmalate dehydratase small subunit (200 aa).

The protein belongs to the LeuD family. LeuD type 1 subfamily. In terms of assembly, heterodimer of LeuC and LeuD.

It catalyses the reaction (2R,3S)-3-isopropylmalate = (2S)-2-isopropylmalate. It participates in amino-acid biosynthesis; L-leucine biosynthesis; L-leucine from 3-methyl-2-oxobutanoate: step 2/4. Catalyzes the isomerization between 2-isopropylmalate and 3-isopropylmalate, via the formation of 2-isopropylmaleate. The sequence is that of 3-isopropylmalate dehydratase small subunit from Edwardsiella ictaluri (strain 93-146).